The following is a 394-amino-acid chain: 1-deoxy-D-xylulose 5-phosphate reductoisomerase (394 aa).

NADPH-binding residues include Thr-10, Gly-11, Ser-12, Ile-13, Gly-38, Arg-39, Asn-40, and Asn-123. Lys-124 contributes to the 1-deoxy-D-xylulose 5-phosphate binding site. Glu-125 contributes to the NADPH binding site. Asp-149 is a binding site for Mn(2+). Positions 150, 151, 175, and 198 each coordinate 1-deoxy-D-xylulose 5-phosphate. Glu-151 provides a ligand contact to Mn(2+). Gly-204 is a binding site for NADPH. 1-deoxy-D-xylulose 5-phosphate contacts are provided by Ser-211, Asn-216, Lys-217, and Glu-220. A Mn(2+)-binding site is contributed by Glu-220.

It belongs to the DXR family. Mg(2+) is required as a cofactor. It depends on Mn(2+) as a cofactor.

It carries out the reaction 2-C-methyl-D-erythritol 4-phosphate + NADP(+) = 1-deoxy-D-xylulose 5-phosphate + NADPH + H(+). The protein operates within isoprenoid biosynthesis; isopentenyl diphosphate biosynthesis via DXP pathway; isopentenyl diphosphate from 1-deoxy-D-xylulose 5-phosphate: step 1/6. Functionally, catalyzes the NADPH-dependent rearrangement and reduction of 1-deoxy-D-xylulose-5-phosphate (DXP) to 2-C-methyl-D-erythritol 4-phosphate (MEP). This is 1-deoxy-D-xylulose 5-phosphate reductoisomerase from Cereibacter sphaeroides (strain ATCC 17023 / DSM 158 / JCM 6121 / CCUG 31486 / LMG 2827 / NBRC 12203 / NCIMB 8253 / ATH 2.4.1.) (Rhodobacter sphaeroides).